A 610-amino-acid polypeptide reads, in one-letter code: Estrogen receptor beta-2 (610 aa).

The modulating stretch occupies residues 1–170 (MSSSTGPAPA…GILGKGDTHF (170 aa)). 2 NR C4-type zinc fingers span residues 171 to 191 (CAVC…CEGC) and 207 to 231 (CPAT…LRKC). The nuclear receptor DNA-binding region spans 171-236 (CAVCHDYASG…RLRKCYEVGM (66 aa)). The 237-residue stretch at 302–538 (SPEQLVNCIL…DLLLEMLDAN (237 aa)) folds into the NR LBD domain. The interval 566–596 (HTSKQQPALKESNQDTRHSPQAEGTVDKTLH) is disordered. The span at 577-596 (SNQDTRHSPQAEGTVDKTLH) shows a compositional bias: basic and acidic residues.

This sequence belongs to the nuclear hormone receptor family. NR3 subfamily. In terms of assembly, binds DNA as a homodimer. Can form a heterodimer with ER-alpha. Predominantly expressed in pituitary, telencephalon and hypothalamus as well as in the liver.

It localises to the nucleus. In terms of biological role, binds estrogens with an affinity similar to that of ER-alpha, and activates expression of reporter genes containing estrogen response elements (ERE) in an estrogen-dependent manner. The polypeptide is Estrogen receptor beta-2 (esr2b) (Carassius auratus (Goldfish)).